Here is a 600-residue protein sequence, read N- to C-terminus: Elongation factor 4 (600 aa).

In terms of domain architecture, tr-type G spans Lys5–Lys187. GTP-binding positions include Asp17–Thr22 and Asn134–Asp137.

The protein belongs to the TRAFAC class translation factor GTPase superfamily. Classic translation factor GTPase family. LepA subfamily.

Its subcellular location is the cell inner membrane. The enzyme catalyses GTP + H2O = GDP + phosphate + H(+). Functionally, required for accurate and efficient protein synthesis under certain stress conditions. May act as a fidelity factor of the translation reaction, by catalyzing a one-codon backward translocation of tRNAs on improperly translocated ribosomes. Back-translocation proceeds from a post-translocation (POST) complex to a pre-translocation (PRE) complex, thus giving elongation factor G a second chance to translocate the tRNAs correctly. Binds to ribosomes in a GTP-dependent manner. In Rickettsia bellii (strain OSU 85-389), this protein is Elongation factor 4.